Reading from the N-terminus, the 367-residue chain is Voltage-gated potassium channel subunit beta-2 (367 aa).

Phosphoserine is present on residues serine 9, serine 14, and serine 20. Position 28 is an asymmetric dimethylarginine; alternate (arginine 28). Residue arginine 28 is modified to Omega-N-methylarginine; alternate. Phosphoserine is present on serine 31. Positions 56, 57, 63, and 85 each coordinate NADP(+). Tyrosine 90 (proton donor/acceptor) is an active-site residue. Serine 112 bears the Phosphoserine mark. Lysine 124 carries the post-translational modification N6-acetyllysine. Positions 158, 188, 189, 214, 243, 244, 245, 246, 247, 248, 254, 262, 264, 323, 325, 329, 332, and 333 each coordinate NADP(+).

It belongs to the shaker potassium channel beta subunit family. Homotetramer. Interaction with tetrameric potassium channel alpha subunits gives rise to a heterooctamer. Identified in potassium channel complexes containing KCNA1, KCNA2, KCNA4, KCNA5, KCNA6, KCNAB1, KCNAB2 and KCND3. Interacts (in unphosphorylated form) with MAPRE1. Forms a ternary complex with SQSTM1 and PRKCZ. Post-translationally, phosphorylated by PRKCZ; may be regulated by incorporation in a complex composed of PRKCZ and SQSTM1. In terms of tissue distribution, detected in brain. Detected at basket cell terminals in cerebellum and in the juxtaparanodal region of nodes of Ranvier (at protein level). Strongest expression in brain and eye. Highest levels in brain detected in brainstem and diencephalon. Strong expression also detected in lung and heart. Moderate expression in kidney, T-lymphocytes and skeletal muscle.

It localises to the cytoplasm. It is found in the membrane. Its subcellular location is the cell membrane. The protein localises to the cell projection. The protein resides in the axon. It localises to the synapse. It is found in the synaptosome. Its subcellular location is the cytoskeleton. The enzyme catalyses hydroxyacetone + NADP(+) = methylglyoxal + NADPH + H(+). The catalysed reaction is (E)-4-oxonon-2-en-1-ol + NADP(+) = (E)-4-oxonon-2-enal + NADPH + H(+). Functionally, regulatory subunit of the voltage-gated potassium (Kv) Shaker channel family. Shaker channels are composed of pore-forming and potassium-conducting alpha subunits and of regulatory beta subunits. The beta-2/KCNAB2 subunit promotes potassium channel closure via a mechanism that does not involve physical obstruction of the channel pore. Promotes the inactivation of Kv1.4/KCNA4 and Kv1.5/KCNA5 alpha subunit-containing channels. Displays nicotinamide adenine dinucleotide phosphate (NADPH)-dependent aldoketoreductase activity by catalyzing the NADPH-dependent reduction of a wide range of aldehyde and ketone substrates. Substrate specificity includes methylglyoxal, 9,10-phenanthrenequinone, prostaglandin J2, 4-nitrobenzaldehyde, 4-nitroacetophenone and 4-oxo-trans-2-nonenal (in vitro, no physiological substrate identified yet). The binding of oxidized and reduced nucleotide cofactors alters Kv channel gating and may contribute to dynamic fine tuning of cell excitability. Contributes to the regulation of nerve signaling, and prevents neuronal hyperexcitability. This is Voltage-gated potassium channel subunit beta-2 from Mus musculus (Mouse).